A 624-amino-acid chain; its full sequence is Fibronectin type III domain-containing protein 2 (624 aa).

The signal sequence occupies residues 1–19 (MREQFSVLVISLLFSSSYG). 5 Fibronectin type-III domains span residues 131–236 (PPQN…TPDI), 240–330 (EPTN…TDVF), 334–430 (MPRF…TVPT), 431–524 (VPRE…PKRD), and 527–624 (VPPN…WPGR).

Prismatic layer of shell (at protein level).

Its subcellular location is the secreted. The protein is Fibronectin type III domain-containing protein 2 of Margaritifera margaritifera (Freshwater pearl mussel).